The sequence spans 878 residues: Alanine--tRNA ligase (878 aa).

The Zn(2+) site is built by His567, His571, Cys669, and His673.

Belongs to the class-II aminoacyl-tRNA synthetase family. Requires Zn(2+) as cofactor.

It localises to the cytoplasm. It carries out the reaction tRNA(Ala) + L-alanine + ATP = L-alanyl-tRNA(Ala) + AMP + diphosphate. In terms of biological role, catalyzes the attachment of alanine to tRNA(Ala) in a two-step reaction: alanine is first activated by ATP to form Ala-AMP and then transferred to the acceptor end of tRNA(Ala). Also edits incorrectly charged Ser-tRNA(Ala) and Gly-tRNA(Ala) via its editing domain. The polypeptide is Alanine--tRNA ligase (Rickettsia canadensis (strain McKiel)).